The sequence spans 211 residues: Pyridoxine/pyridoxamine 5'-phosphate oxidase (211 aa).

Substrate-binding positions include 7-10 (RREY) and Lys65. Residues 60-65 (RIVLLK), 75-76 (YT), Arg81, Lys82, and Gln104 contribute to the FMN site. Substrate contacts are provided by Tyr122, Arg126, and Ser130. Residues 139–140 (QS) and Trp184 each bind FMN. 190–192 (RLH) provides a ligand contact to substrate. Arg194 contacts FMN.

It belongs to the pyridoxamine 5'-phosphate oxidase family. Homodimer. The cofactor is FMN.

The catalysed reaction is pyridoxamine 5'-phosphate + O2 + H2O = pyridoxal 5'-phosphate + H2O2 + NH4(+). It catalyses the reaction pyridoxine 5'-phosphate + O2 = pyridoxal 5'-phosphate + H2O2. The protein operates within cofactor metabolism; pyridoxal 5'-phosphate salvage; pyridoxal 5'-phosphate from pyridoxamine 5'-phosphate: step 1/1. It participates in cofactor metabolism; pyridoxal 5'-phosphate salvage; pyridoxal 5'-phosphate from pyridoxine 5'-phosphate: step 1/1. Its function is as follows. Catalyzes the oxidation of either pyridoxine 5'-phosphate (PNP) or pyridoxamine 5'-phosphate (PMP) into pyridoxal 5'-phosphate (PLP). The chain is Pyridoxine/pyridoxamine 5'-phosphate oxidase from Vibrio cholerae serotype O1 (strain ATCC 39541 / Classical Ogawa 395 / O395).